A 236-amino-acid polypeptide reads, in one-letter code: RING-H2 finger protein ATL7 (236 aa).

Residues 31–51 form a helical membrane-spanning segment; it reads AFIFSVPICFTFIVLFVLYVI. The RING-type; atypical zinc-finger motif lies at 111–153; that stretch reads CSVCLGDYQAEEKLQQMPSCGHTFHMECIDLWLTSHTTCPLCR. Polar residues predominate over residues 176–196; it reads ENSNGGEASTQPDSQSATEAI. The segment at 176-236 is disordered; that stretch reads ENSNGGEAST…SDGCCTCRLG (61 aa). Positions 197–221 are enriched in basic and acidic residues; it reads SHTDDVEEGNRDSQEVSKETEENDR.

It belongs to the RING-type zinc finger family. ATL subfamily.

It localises to the membrane. It carries out the reaction S-ubiquitinyl-[E2 ubiquitin-conjugating enzyme]-L-cysteine + [acceptor protein]-L-lysine = [E2 ubiquitin-conjugating enzyme]-L-cysteine + N(6)-ubiquitinyl-[acceptor protein]-L-lysine.. Its pathway is protein modification; protein ubiquitination. This chain is RING-H2 finger protein ATL7 (ATL7), found in Arabidopsis thaliana (Mouse-ear cress).